The chain runs to 212 residues: Calaxin (212 aa).

EF-hand domains are found at residues 65–100, 101–136, and 146–181; these read TDDM…FLRG, TLEE…SLLK, and GIKD…ETLL. Ca(2+)-binding residues include D78, D80, D82, C84, E89, D114, N116, D118, E125, D159, D161, D163, K165, and D170.

As to quaternary structure, component of the outer dynein arm-docking complex along with ODAD1, ODAD2, ODAD3 and ODAD4. In terms of tissue distribution, expressed in trachea multiciliated cells.

The protein resides in the cytoplasm. Its subcellular location is the cytoskeleton. The protein localises to the cilium axoneme. It localises to the cell projection. It is found in the cilium. The protein resides in the flagellum. Functionally, component of the outer dynein arm-docking complex (ODA-DC) that mediates outer dynein arms (ODA) binding onto the doublet microtubule. Seems to regulate the assembly of both ODAs and their axonemal docking complex onto ciliary microtubules. Regulates ciliary and flagellar motility and is required for cilia-driven determination of body laterality. The sequence is that of Calaxin (CLXN) from Bos taurus (Bovine).